A 195-amino-acid polypeptide reads, in one-letter code: MARCKS-related protein (195 aa).

Residues 1-195 (MGSQSSKAPR…PTPASAEQNE (195 aa)) form a disordered region. A lipid anchor (N-myristoyl glycine) is attached at glycine 2. Threonine 14 bears the Phosphothreonine mark. Residues 16–26 (EEAAGASPAKA) show a composition bias toward low complexity. Residues serine 22, serine 36, serine 41, and serine 48 each carry the phosphoserine modification. Low complexity predominate over residues 53–64 (GTDEAAGATGDA). Serine 71 carries the post-translational modification Phosphoserine. The segment covering 76–85 (AKGEVPPKET) has biased composition (basic and acidic residues). Position 85 is a phosphothreonine (threonine 85). Basic residues predominate over residues 86 to 98 (PKKKKKFSFKKPF). Residues 87–110 (KKKKKFSFKKPFKLSGLSFKRNRK) form an effector domain involved in lipid-binding and calmodulin-binding region. 6 positions are modified to phosphoserine: serine 93, serine 101, serine 104, serine 119, serine 120, and serine 135. A Phosphothreonine modification is found at threonine 148. Phosphoserine occurs at positions 151, 162, and 165. Low complexity predominate over residues 153-195 (EPQAKGAEASAASEEEAGPQATEPSTPSGPESGPTPASAEQNE). Threonine 178 and threonine 187 each carry phosphothreonine.

The protein belongs to the MARCKS family. In terms of assembly, binds to filamentous actin (F-actin), but not to monomeric G-actin, independently of its phosphorylation status. Post-translationally, phosphorylated. Phosphorylation at Ser-120 and Thr-178 is non-redundantly catalyzed by MAPK8 in vivo. Phosphorylation at Thr-148 is preferentially catalyzed by MAPK8 in vivo, but this modification can also be catalyzed by other kinases in the absence of MAPK8. May be phosphorylated by protein kinase C, which disrupts the interaction with calmodulin.

It is found in the cytoplasm. The protein resides in the cytoskeleton. It localises to the cell membrane. Its function is as follows. Controls cell movement by regulating actin cytoskeleton homeostasis and filopodium and lamellipodium formation. When unphosphorylated, induces cell migration. When phosphorylated by MAPK8, induces actin bundles formation and stabilization, thereby reducing actin plasticity, hence restricting cell movement, including neuronal migration. May be involved in coupling the protein kinase C and calmodulin signal transduction systems. In Homo sapiens (Human), this protein is MARCKS-related protein (MARCKSL1).